The chain runs to 214 residues: tRNA (guanine-N(7)-)-methyltransferase (214 aa).

Residues Asp-35, Glu-60, Asn-87, and Asp-113 each contribute to the S-adenosyl-L-methionine site. Asp-113 is an active-site residue. Substrate-binding residues include Lys-117 and Asp-149.

It belongs to the class I-like SAM-binding methyltransferase superfamily. TrmB family.

The enzyme catalyses guanosine(46) in tRNA + S-adenosyl-L-methionine = N(7)-methylguanosine(46) in tRNA + S-adenosyl-L-homocysteine. It functions in the pathway tRNA modification; N(7)-methylguanine-tRNA biosynthesis. Its function is as follows. Catalyzes the formation of N(7)-methylguanine at position 46 (m7G46) in tRNA. The polypeptide is tRNA (guanine-N(7)-)-methyltransferase (Prochlorococcus marinus (strain NATL1A)).